The chain runs to 185 residues: Ubiquitin-fold modifier-conjugating enzyme 1 (185 aa).

Cysteine 119 (glycyl thioester intermediate) is an active-site residue.

The protein belongs to the ubiquitin-conjugating enzyme family. UFC1 subfamily.

Functionally, E2-like enzyme which forms an intermediate with UFM1 via a thioester linkage. The protein is Ubiquitin-fold modifier-conjugating enzyme 1 of Oryza sativa subsp. japonica (Rice).